We begin with the raw amino-acid sequence, 618 residues long: Proline--tRNA ligase (618 aa).

It belongs to the class-II aminoacyl-tRNA synthetase family. ProS type 1 subfamily. In terms of assembly, homodimer.

The protein resides in the cytoplasm. It catalyses the reaction tRNA(Pro) + L-proline + ATP = L-prolyl-tRNA(Pro) + AMP + diphosphate. Functionally, catalyzes the attachment of proline to tRNA(Pro) in a two-step reaction: proline is first activated by ATP to form Pro-AMP and then transferred to the acceptor end of tRNA(Pro). As ProRS can inadvertently accommodate and process non-cognate amino acids such as alanine and cysteine, to avoid such errors it has two additional distinct editing activities against alanine. One activity is designated as 'pretransfer' editing and involves the tRNA(Pro)-independent hydrolysis of activated Ala-AMP. The other activity is designated 'posttransfer' editing and involves deacylation of mischarged Ala-tRNA(Pro). The misacylated Cys-tRNA(Pro) is not edited by ProRS. The sequence is that of Proline--tRNA ligase from Streptococcus pyogenes serotype M3 (strain ATCC BAA-595 / MGAS315).